The sequence spans 394 residues: GDNF family receptor alpha-like (394 aa).

The N-terminal stretch at Met1–Ser19 is a signal peptide. Residues Gln20–Gly350 are Extracellular-facing. Residues Asn65, Asn101, and Asn115 are each glycosylated (N-linked (GlcNAc...) asparagine). 11 cysteine pairs are disulfide-bonded: Cys132–Cys190, Cys139–Cys145, Cys156–Cys168, Cys163–Cys211, Cys192–Cys199, Cys221–Cys292, Cys228–Cys234, Cys245–Cys276, Cys253–Cys259, Cys270–Cys317, and Cys294–Cys305. The segment at Ala150–Arg229 is required for interaction with GDF15. Residues Glu351–Leu371 form a helical membrane-spanning segment. Over Lys372 to Gln394 the chain is Cytoplasmic.

This sequence belongs to the GDNFR family. In terms of assembly, interacts (via the extracellular domain) with GDF15 and RET; receptor of GDF15, mediates cellular signaling through interaction with RET after GDF15-binding. Interaction with RET requires previous GDF15-binding. Post-translationally, cleaved and inactivated by MMP14, inhibiting the GDF15-GFRAL aversive response. Expressed in the brainstem, restricted to cells in the area postrema and the immediately adjacent region of the nucleus tractus solitarius. Detected at low levels in testis.

The protein localises to the cell membrane. Functionally, brainstem-restricted receptor for GDF15 hormone, which triggers an aversive response, characterized by nausea, vomiting, and/or loss of appetite in response to various stresses. The aversive response is both required to reduce continuing exposure to those stresses at the time of exposure and to promote avoidance behavior in the future. The GDF15-GFRAL aversive response is triggered by stresses, such as anticancer drugs (camptothecin or cisplatin), cancers or drugs such as metformin. Upon interaction with its ligand, GDF15, mediates the GDF15-induced autophosphorylation and activation of the RET tyrosine kinase receptor, leading to activation of MAPK- and AKT- signaling pathways. Ligand-binding activates GFRAL-expressing neurons localized in the area postrema and nucleus tractus solitarius of the brainstem. The GDF15-GFRAL signal induces expression of genes involved in metabolism, such as lipid metabolism in adipose tissues. This chain is GDNF family receptor alpha-like, found in Rattus norvegicus (Rat).